The following is a 393-amino-acid chain: Mitogen-activated protein kinase homolog NTF4 (393 aa).

Residues 1–32 (MDGPAHQTDTVMSDAAGQQPAPPSQPVAGIDN) form a disordered region. In terms of domain architecture, Protein kinase spans 60-345 (KPPIMPIGKG…VEDALAHPYL (286 aa)). ATP-binding positions include 66 to 74 (IGKGAYGIV) and K89. D186 acts as the Proton acceptor in catalysis. T218 bears the Phosphothreonine mark. The TXY signature appears at 218–220 (TEY). Y220 is subject to Phosphotyrosine.

The protein belongs to the protein kinase superfamily. CMGC Ser/Thr protein kinase family. MAP kinase subfamily. Mg(2+) serves as cofactor. In terms of processing, dually phosphorylated on Thr-218 and Tyr-220, which activates the enzyme. Very low autophosphorylation, although dramatically increased when Mn(2+) is added to the reaction instead of Mg(2+).

It catalyses the reaction L-seryl-[protein] + ATP = O-phospho-L-seryl-[protein] + ADP + H(+). It carries out the reaction L-threonyl-[protein] + ATP = O-phospho-L-threonyl-[protein] + ADP + H(+). Its activity is regulated as follows. Activated by tyrosine and threonine phosphorylation. In Nicotiana tabacum (Common tobacco), this protein is Mitogen-activated protein kinase homolog NTF4 (NTF4).